Here is a 191-residue protein sequence, read N- to C-terminus: Recombination protein RecR (191 aa).

The segment at 56-71 (CQNCNFLQSNNICHFC) adopts a C4-type zinc-finger fold. Residues 78-170 (KQLMIFETTS…KVTKLAQGLP (93 aa)) form the Toprim domain.

It belongs to the RecR family.

Functionally, may play a role in DNA repair. It seems to be involved in an RecBC-independent recombinational process of DNA repair. It may act with RecF and RecO. The sequence is that of Recombination protein RecR from Mycoplasmopsis pulmonis (strain UAB CTIP) (Mycoplasma pulmonis).